A 452-amino-acid polypeptide reads, in one-letter code: Pup--protein ligase (452 aa).

E9 is a Mg(2+) binding site. R53 lines the ATP pocket. Y55 lines the Mg(2+) pocket. D57 functions as the Proton acceptor in the catalytic mechanism. E63 provides a ligand contact to Mg(2+). Positions 66 and 419 each coordinate ATP.

This sequence belongs to the Pup ligase/Pup deamidase family. Pup-conjugating enzyme subfamily.

The catalysed reaction is ATP + [prokaryotic ubiquitin-like protein]-L-glutamate + [protein]-L-lysine = ADP + phosphate + N(6)-([prokaryotic ubiquitin-like protein]-gamma-L-glutamyl)-[protein]-L-lysine.. It participates in protein degradation; proteasomal Pup-dependent pathway. It functions in the pathway protein modification; protein pupylation. Catalyzes the covalent attachment of the prokaryotic ubiquitin-like protein modifier Pup to the proteasomal substrate proteins, thereby targeting them for proteasomal degradation. This tagging system is termed pupylation. The ligation reaction involves the side-chain carboxylate of the C-terminal glutamate of Pup and the side-chain amino group of a substrate lysine. This Streptosporangium roseum (strain ATCC 12428 / DSM 43021 / JCM 3005 / KCTC 9067 / NCIMB 10171 / NRRL 2505 / NI 9100) protein is Pup--protein ligase.